A 270-amino-acid polypeptide reads, in one-letter code: Chymotrypsin-like elastase family member 3B (270 aa).

Residues 1 to 15 (MMLRLLSSLLLVAVA) constitute a signal peptide (or 16). Positions 16–28 (SGYGPPSSRPSSR) are cleaved as a propeptide — activation peptide. Residues 29–268 (VVNGEDAVPY…FIDWIEETIA (240 aa)) form the Peptidase S1 domain. The cysteines at positions 58 and 74 are disulfide-linked. His73 serves as the catalytic Charge relay system. An N-linked (GlcNAc...) asparagine glycan is attached at Asn114. Cys117 and Cys120 are joined by a disulfide. The Charge relay system role is filled by Asp123. Disulfide bonds link Cys157–Cys223, Cys188–Cys204, and Cys213–Cys244. Catalysis depends on Ser217, which acts as the Charge relay system.

The protein belongs to the peptidase S1 family. Elastase subfamily. Pancreas. Not detectable in keratinocytes.

The enzyme catalyses Preferential cleavage: Ala-|-Xaa. Does not hydrolyze elastin.. Its function is as follows. Efficient protease with alanine specificity but only little elastolytic activity. This is Chymotrypsin-like elastase family member 3B (CELA3B) from Homo sapiens (Human).